Reading from the N-terminus, the 241-residue chain is MORN repeat-containing protein 3 (241 aa).

An interaction with MDM2 region spans residues 6–35 (CPQKSEPLWKEWDQKAQKNGLRHQVFAVNG). MORN repeat units follow at residues 38–60 (YVGE…KNGA), 62–84 (YEGD…DQET), 91–113 (YSGW…PKEY), 114–136 (YEGD…NGDI), 137–159 (YEGQ…NGNR), 160–182 (YEGN…DHGQ), and 184–205 (FEGF…GRDE). The interval 76–100 (TLSLPDQETGKYKRAYSGWWKGDKK) is interaction with SIRT1. The tract at residues 206-240 (APQPTQFPIPEVKILDPDGVLEEALAMFKKTKEEG) is interaction with TP53.

In terms of assembly, interacts with MEIG1. Interacts with TP53, MDM2 and SIRT1; the interactions mediate post-transcriptional modifications of TP53 by MDM2 and SIRT1.

It is found in the cytoplasmic vesicle. The protein localises to the secretory vesicle. The protein resides in the acrosome. Functionally, assembles a suppression complex (suppresome) by tethering SIRT1 and MDM2 to regulate composite modifications of p53/TP53. Confers both deacetylation-mediated functional inactivation, by SIRT1, and ubiquitination-dependent degradation, by MDM2, of p53/TP53, promoting a proliferative and cell survival behaviors. May play a role in the regulation of spermatogenesis. The polypeptide is MORN repeat-containing protein 3 (MORN3) (Bos taurus (Bovine)).